A 34-amino-acid chain; its full sequence is Mu-conotoxin GS (34 aa).

Disulfide bonds link cysteine 2–cysteine 14, cysteine 9–cysteine 19, and cysteine 13–cysteine 27. A 4-hydroxyproline mark is found at proline 10 and proline 11. Glutamate 32 carries the post-translational modification 4-carboxyglutamate.

Expressed by the venom duct.

Its subcellular location is the secreted. Mu-conotoxins block voltage-gated sodium channels (Nav). No effect was observed upon injections into mice and goldfish (25 ug). The polypeptide is Mu-conotoxin GS (Conus geographus (Geography cone)).